The sequence spans 240 residues: MGHESPLYSLDLFGHEMIFDLSSMLMLTVTAAIVFLIAMLFTRNLSVRPHGKQNFIEWIFDFTRGIINSNMAWNKGGRFHFLAVTLLLFIFVANMLGLPFAIINGHTLWWKSPTADPTVTLTLSTLMVLLTHFYGVKMRGTGNYLKSFAQPVWFMVPFKIIEEFSSTLTLGLRLYGNIFAGEVLLGLLATLGTAGAAGMLGAAIPTLIWQGFSIFVGSIQAYIFVMLSMVYMSHKVSDDH.

5 helical membrane-spanning segments follow: residues 21 to 41, 83 to 103, 116 to 136, 184 to 204, and 207 to 227; these read LSSM…AMLF, AVTL…FAII, DPTV…FYGV, LLGL…GAAI, and LIWQ…FVML.

This sequence belongs to the ATPase A chain family. As to quaternary structure, F-type ATPases have 2 components, CF(1) - the catalytic core - and CF(0) - the membrane proton channel. CF(1) has five subunits: alpha(3), beta(3), gamma(1), delta(1), epsilon(1). CF(0) has three main subunits: a(1), b(2) and c(9-12). The alpha and beta chains form an alternating ring which encloses part of the gamma chain. CF(1) is attached to CF(0) by a central stalk formed by the gamma and epsilon chains, while a peripheral stalk is formed by the delta and b chains.

The protein resides in the cell membrane. In terms of biological role, key component of the proton channel; it plays a direct role in the translocation of protons across the membrane. In Macrococcus caseolyticus (strain JCSC5402) (Macrococcoides caseolyticum), this protein is ATP synthase subunit a.